Consider the following 177-residue polypeptide: Large ribosomal subunit protein uL6 (177 aa).

This sequence belongs to the universal ribosomal protein uL6 family. Part of the 50S ribosomal subunit.

This protein binds to the 23S rRNA, and is important in its secondary structure. It is located near the subunit interface in the base of the L7/L12 stalk, and near the tRNA binding site of the peptidyltransferase center. This Verminephrobacter eiseniae (strain EF01-2) protein is Large ribosomal subunit protein uL6.